A 380-amino-acid chain; its full sequence is Cytochrome b (380 aa).

4 consecutive transmembrane segments (helical) span residues 34 to 54, 78 to 99, 114 to 134, and 179 to 199; these read FGSLLGICLATQILTGLLLAA, WLIRNLHANGASFFFICIYLHI, WNTGVILLLTLMATAFVGYVL, and FFTLHFLLPFMIMGLTLIHLT. The heme b site is built by histidine 84 and histidine 98. Residues histidine 183 and histidine 197 each contribute to the heme b site. Residue histidine 202 participates in a ubiquinone binding. Transmembrane regions (helical) follow at residues 227–247, 289–309, 321–341, and 348–368; these read LKDILGFMLMLLPLMTLALFS, LGGVLALAASVLILFLAPLLH, FSQLLFWTLTANVLILTWVGS, and FIIIGQLASLTYFTILLILFP.

This sequence belongs to the cytochrome b family. As to quaternary structure, the cytochrome bc1 complex contains 11 subunits: 3 respiratory subunits (MT-CYB, CYC1 and UQCRFS1), 2 core proteins (UQCRC1 and UQCRC2) and 6 low-molecular weight proteins (UQCRH/QCR6, UQCRB/QCR7, UQCRQ/QCR8, UQCR10/QCR9, UQCR11/QCR10 and a cleavage product of UQCRFS1). This cytochrome bc1 complex then forms a dimer. Heme b is required as a cofactor.

It localises to the mitochondrion inner membrane. Component of the ubiquinol-cytochrome c reductase complex (complex III or cytochrome b-c1 complex) that is part of the mitochondrial respiratory chain. The b-c1 complex mediates electron transfer from ubiquinol to cytochrome c. Contributes to the generation of a proton gradient across the mitochondrial membrane that is then used for ATP synthesis. The chain is Cytochrome b (MT-CYB) from Bugeranus carunculatus (Wattled crane).